Here is a 280-residue protein sequence, read N- to C-terminus: tRNase Z TRZ1 (280 aa).

Belongs to the RNase Z family. Homodimer. Zn(2+) is required as a cofactor. The cofactor is Ca(2+). It depends on Mn(2+) as a cofactor. Mg(2+) serves as cofactor.

It localises to the cytoplasm. The enzyme catalyses Endonucleolytic cleavage of RNA, removing extra 3' nucleotides from tRNA precursor, generating 3' termini of tRNAs. A 3'-hydroxy group is left at the tRNA terminus and a 5'-phosphoryl group is left at the trailer molecule.. In terms of biological role, zinc phosphodiesterase, which displays tRNA 3'-processing endonuclease activity. Involved in tRNA maturation, by removing a 3'-trailer from precursor tRNA. Can use bis-(p-nitophenyl) phosphate (bpNPP) as substrate. Involved in the processing of small nucleolar RNAs (snoRNAs). The chain is tRNase Z TRZ1 from Arabidopsis thaliana (Mouse-ear cress).